The chain runs to 325 residues: Phospho-N-acetylmuramoyl-pentapeptide-transferase (325 aa).

Helical transmembrane passes span 7–27, 57–77, 81–101, 122–142, 146–166, 186–206, 227–247, 252–272, and 302–322; these read LFVL…FIPF, IVIV…ITGF, LLLL…DDYL, VIAA…FIAI, TFGF…LLGA, IAFG…TALF, VFMG…IAIL, LMLI…IIQV, and VVVT…YIGV.

It belongs to the glycosyltransferase 4 family. MraY subfamily. The cofactor is Mg(2+).

It localises to the cell membrane. The enzyme catalyses UDP-N-acetyl-alpha-D-muramoyl-L-alanyl-gamma-D-glutamyl-meso-2,6-diaminopimeloyl-D-alanyl-D-alanine + di-trans,octa-cis-undecaprenyl phosphate = di-trans,octa-cis-undecaprenyl diphospho-N-acetyl-alpha-D-muramoyl-L-alanyl-D-glutamyl-meso-2,6-diaminopimeloyl-D-alanyl-D-alanine + UMP. The protein operates within cell wall biogenesis; peptidoglycan biosynthesis. In terms of biological role, catalyzes the initial step of the lipid cycle reactions in the biosynthesis of the cell wall peptidoglycan: transfers peptidoglycan precursor phospho-MurNAc-pentapeptide from UDP-MurNAc-pentapeptide onto the lipid carrier undecaprenyl phosphate, yielding undecaprenyl-pyrophosphoryl-MurNAc-pentapeptide, known as lipid I. The protein is Phospho-N-acetylmuramoyl-pentapeptide-transferase of Shouchella clausii (strain KSM-K16) (Alkalihalobacillus clausii).